The chain runs to 160 residues: Large ribosomal subunit protein uL15 (160 aa).

Residues 1–14 (MKLNDISDNPGSSK) show a composition bias toward polar residues. A disordered region spans residues 1-35 (MKLNDISDNPGSSKSRMRVGRGIGSGKGKTCGRGV). The segment covering 21–35 (RGIGSGKGKTCGRGV) has biased composition (gly residues).

The protein belongs to the universal ribosomal protein uL15 family. As to quaternary structure, part of the 50S ribosomal subunit.

In terms of biological role, binds to the 23S rRNA. The sequence is that of Large ribosomal subunit protein uL15 from Beijerinckia indica subsp. indica (strain ATCC 9039 / DSM 1715 / NCIMB 8712).